Consider the following 607-residue polypeptide: Guanine nucleotide-binding protein-like 1 (607 aa).

Positions 1–14 are enriched in basic residues; that stretch reads MPRKKPFSVKQKKK. Residues 1–81 are disordered; it reads MPRKKPFSVK…GPRGYDPNRY (81 aa). Positions 15–26 are enriched in basic and acidic residues; sequence QLQDKRERKRGL. 3 positions are modified to phosphoserine: Ser32, Ser33, and Ser34. Phosphothreonine occurs at positions 48 and 50. A phosphoserine mark is found at Ser51 and Ser68. The 241-residue stretch at 178-418 folds into the CP-type G domain; sequence WRQLWRVLEM…LCDCPGLIFP (241 aa). Residue 225–228 participates in GTP binding; sequence NKVD. At Ser324 the chain carries Phosphoserine. GTP-binding positions include 367-374 and 411-415; these read GFPNVGKS and DCPGL. The disordered stretch occupies residues 547 to 607; it reads GPAGDEEEEE…PYALLGEDEC (61 aa). The segment covering 550 to 584 has biased composition (acidic residues); that stretch reads GDEEEEEEEELSSSCEEEGEEDRDADEEGEGDEDT. A phosphoserine mark is found at Ser561, Ser562, and Ser563.

The protein belongs to the TRAFAC class YlqF/YawG GTPase family.

Functionally, possible regulatory or functional link with the histocompatibility cluster. This is Guanine nucleotide-binding protein-like 1 (GNL1) from Macaca fascicularis (Crab-eating macaque).